Consider the following 171-residue polypeptide: Nudix hydrolase DR_0079 (171 aa).

The Nudix hydrolase domain maps to 32–162 (ERVRVVNAFL…EAAKGDLAEL (131 aa)). The Nudix box signature appears at 69-91 (GGAVQSGETYEEAFRREAREELN). Mg(2+) is bound by residues glutamate 85 and glutamate 89.

It belongs to the Nudix hydrolase family. In terms of assembly, monomer. Requires Mg(2+) as cofactor.

Inhibited by zinc, calcium or copper ions. Hydrolase that converts various nucleotide triphosphates (NTPs) to the corresponding nucleotide monophosphates and diphosphate, and nucleotide diphosphates to nucleotide monophosphates and inorganic phosphate. Has a marked preference for cytosine ribonucleoside 5'-diphosphate (CDP) and cytosine ribonucleoside 5'-triphosphate (CTP). Has lower activity towards the deoxyribose nucleotides dCDP and dCTP, and towards dGDP, TDP and UDP. In Deinococcus radiodurans (strain ATCC 13939 / DSM 20539 / JCM 16871 / CCUG 27074 / LMG 4051 / NBRC 15346 / NCIMB 9279 / VKM B-1422 / R1), this protein is Nudix hydrolase DR_0079.